The sequence spans 124 residues: Small ribosomal subunit protein uS13 (124 aa).

The tract at residues 95–124 (GLPVRGQRTRHNARTRKGPRKTVGAKKGKR) is disordered. Basic residues predominate over residues 101 to 124 (QRTRHNARTRKGPRKTVGAKKGKR).

It belongs to the universal ribosomal protein uS13 family. As to quaternary structure, part of the 30S ribosomal subunit. Forms a loose heterodimer with protein S19. Forms two bridges to the 50S subunit in the 70S ribosome.

Located at the top of the head of the 30S subunit, it contacts several helices of the 16S rRNA. In the 70S ribosome it contacts the 23S rRNA (bridge B1a) and protein L5 of the 50S subunit (bridge B1b), connecting the 2 subunits; these bridges are implicated in subunit movement. Contacts the tRNAs in the A and P-sites. The chain is Small ribosomal subunit protein uS13 from Coprothermobacter proteolyticus (strain ATCC 35245 / DSM 5265 / OCM 4 / BT).